A 796-amino-acid polypeptide reads, in one-letter code: Pathogenesis-related homeodomain protein (796 aa).

Disordered regions lie at residues 34–57 (KKGK…EELC) and 80–99 (VKKT…KVEV). The segment covering 81–90 (KKTRKRKSKR) has biased composition (basic residues). The segment at 190–247 (HIFCAECNSREAFPDNDIILCDGTCNRAFHQKCLDPPLETESIPPGDQGWFCKFCDCK) adopts a PHD-type zinc-finger fold. 3 disordered regions span residues 282–347 (SEAT…STGS), 393–422 (LQEQ…STLV), and 511–736 (NRKT…TEEE). Over residues 292–303 (WPSDDSKDDDYD) the composition is skewed to acidic residues. The segment at residues 452–511 (GGRRRMFRLPRNAVEKLRQVFAETELPSKAVRDRLAKELSLDPEKVNKWFKNTRYMALRN) is a DNA-binding region (homeobox). Composition is skewed to polar residues over residues 538–547 (ENNTETNEVQ) and 560–569 (ATNQNILSPC). Residues 570–580 (NNNQEEFQQEN) are compositionally biased toward low complexity. Residues 581–600 (VSFPSPTDESQQYLEQNDSS) are compositionally biased toward polar residues. Tandem repeats lie at residues 605–631 (PHEK…MMKE), 632–658 (PHEE…MIEE), 659–685 (PHEE…MMEE), and 686–712 (PHDE…MTEE). The interval 605–735 (PHEKQSSEIS…KETGRKMTEE (131 aa)) is 5 X 27 AA tandem repeats. Basic and acidic residues-rich tracts occupy residues 624–636 (TESK…HEEL), 645–690 (AAEE…HDEL), and 700–733 (VEEK…RKMT). A 5; truncated repeat occupies 713 to 735 (SHEELSNEMSLEEKETGRKMTEE). Residues 738-759 (LEAVMEMLCRTENKLLDVTQRL) are leucine-zipper.

Belongs to the PHD-associated homeobox family.

Its subcellular location is the nucleus. Specifically binds to the fungal elicitor-responsive DNA element, 5'-CTAATTGTTTA-3', of the gene PR2 promoter. This is Pathogenesis-related homeodomain protein (PRH) from Arabidopsis thaliana (Mouse-ear cress).